The sequence spans 422 residues: MAM and fibronectin type III domain-containing protein 1 (422 aa).

The region spanning 1-75 (KFYYHMYGAT…VSLMEGICAG (75 aa)) is the MAM domain. 3 Fibronectin type-III domains span residues 2–74 (FYYH…GICA), 196–286 (PGWN…QART), and 291–386 (PSRA…YIVT).

As to expression, component of the acid-insoluble and acid-soluble organic matrix of the aragonitic skeleton (at protein level).

The protein resides in the secreted. The chain is MAM and fibronectin type III domain-containing protein 1 from Acropora millepora (Staghorn coral).